Consider the following 502-residue polypeptide: Cysteine protease RavZ (502 aa).

Short sequence motifs (LIR) lie at residues 9 to 23 (DKLI…GEQE) and 23 to 37 (ESDI…GDEK). The catalytic region stretch occupies residues 49–325 (SIYPPETSWE…ESALTEGKTL (277 aa)). Residues His-176 and Asp-197 contribute to the active site. An alpha-3 helix region spans residues 211–217 (YFKGKYR). Cys-258 is a catalytic residue. The tract at residues 326 to 431 (PVQLSEFIVA…VLPCVKFDDT (106 aa)) is membrane targeting region. The LIR 3 signature appears at 429 to 443 (DDTIDDFVTIEKDEL).

The protein localises to the secreted. It localises to the host cytoplasmic vesicle membrane. The catalysed reaction is [protein]-C-terminal L-amino acid-glycyl-phosphatidylethanolamide + H2O = a 1,2-diacyl-sn-glycero-3-phosphoethanolamine-N-glycine + [protein]-C-terminal &lt;stereo&gt;L-&lt;/stereo&gt;amino acid. The enzyme catalyses [protein]-C-terminal L-amino acid-glycyl-phosphatidylserine + H2O = 1,2-diacyl-sn-glycero-3-phospho-L-serine-N-glycine + [protein]-C-terminal &lt;stereo&gt;L-&lt;/stereo&gt;amino acid. In terms of biological role, cysteine protease effector that inhibits host cell autophagy by targeting lipid-conjugated ATG8 family proteins on pre-autophagosomal structures. Specifically hydrolyzes the amide bond between the C-terminal glycine residue and an adjacent aromatic residue in ATG8 proteins conjugated to phosphatidylethanolamine (PE), producing an ATG8 protein that cannot be reconjugated by host ATG7 and ATG3. Mechanistically, Ravz interacts with ATG8 proteins conjugated to PE via its LIR motifs, extracts them from the membrane of autophagosomes and integrates the PE part into its own lipid-binding site. It then removes the lipid component of the ATG8 protein. Also able to mediate delipidation of ATG8 proteins conjugated to phosphatidylserine (PS) during non-canonical autophagy. Inhibits host ubiquitin recruitment to bacteria-containing vacuoles, suggesting that it is able to mediate delipidation of other proteins in addition to ATG8 proteins. It is however not involved in the exclusion of autophagy adapters from bacteria-containing vacuoles decorated with ubiquitin. This Legionella pneumophila subsp. pneumophila (strain Philadelphia 1 / ATCC 33152 / DSM 7513) protein is Cysteine protease RavZ.